The following is a 206-amino-acid chain: Phosphoheptose isomerase (206 aa).

The 159-residue stretch at Leu-37–Glu-195 folds into the SIS domain. Asn-52–Gly-54 contacts substrate. Zn(2+)-binding residues include His-61 and Glu-65. Substrate-binding positions include Glu-65, Asn-93–Asp-94, Ser-119–Ser-121, Ser-124, and Gln-172. Positions 172 and 180 each coordinate Zn(2+).

It belongs to the SIS family. GmhA subfamily. Homotetramer. It depends on Zn(2+) as a cofactor.

The protein localises to the cytoplasm. The enzyme catalyses 2 D-sedoheptulose 7-phosphate = D-glycero-alpha-D-manno-heptose 7-phosphate + D-glycero-beta-D-manno-heptose 7-phosphate. The protein operates within carbohydrate biosynthesis; D-glycero-D-manno-heptose 7-phosphate biosynthesis; D-glycero-alpha-D-manno-heptose 7-phosphate and D-glycero-beta-D-manno-heptose 7-phosphate from sedoheptulose 7-phosphate: step 1/1. Functionally, catalyzes the isomerization of sedoheptulose 7-phosphate in D-glycero-D-manno-heptose 7-phosphate. The chain is Phosphoheptose isomerase from Hamiltonella defensa subsp. Acyrthosiphon pisum (strain 5AT).